We begin with the raw amino-acid sequence, 276 residues long: Thiazole synthase (276 aa).

Lysine 112 serves as the catalytic Schiff-base intermediate with DXP. Residues glycine 173, 199–200, and 221–222 each bind 1-deoxy-D-xylulose 5-phosphate; these read AG and NT.

It belongs to the ThiG family. As to quaternary structure, homotetramer. Forms heterodimers with either ThiH or ThiS.

It is found in the cytoplasm. It carries out the reaction [ThiS sulfur-carrier protein]-C-terminal-Gly-aminoethanethioate + 2-iminoacetate + 1-deoxy-D-xylulose 5-phosphate = [ThiS sulfur-carrier protein]-C-terminal Gly-Gly + 2-[(2R,5Z)-2-carboxy-4-methylthiazol-5(2H)-ylidene]ethyl phosphate + 2 H2O + H(+). Its pathway is cofactor biosynthesis; thiamine diphosphate biosynthesis. In terms of biological role, catalyzes the rearrangement of 1-deoxy-D-xylulose 5-phosphate (DXP) to produce the thiazole phosphate moiety of thiamine. Sulfur is provided by the thiocarboxylate moiety of the carrier protein ThiS. In vitro, sulfur can be provided by H(2)S. The protein is Thiazole synthase of Synechococcus sp. (strain ATCC 27144 / PCC 6301 / SAUG 1402/1) (Anacystis nidulans).